Reading from the N-terminus, the 100-residue chain is Sodium-influx-stimulating peptide (100 aa).

The N-terminal stretch at 1-23 (MLSSVALRYLLVLSLAFLAVVTS) is a signal peptide.

Post-translationally, three disulfide bonds are present. Expressed by the yellow cells, peptidergic (neuroendocrine) neurons of the central nervous system.

In terms of biological role, stimulates integumental Na(+) uptake. Controls the activity of sodium pumps in the integument, pericardium, ureter and nephridial gland. This Lymnaea stagnalis (Great pond snail) protein is Sodium-influx-stimulating peptide (SIS).